Reading from the N-terminus, the 92-residue chain is MATTYEEFSAKLDRLGEEFNRKMQEQNAKFFADKPDESTLSPEMKEHYEKFERMIKEHTEKFNKKMHEHSEHFKQKFAELLEQQKAAQYPSK.

This sequence belongs to the KMP-11 family. In terms of assembly, monomer.

The protein resides in the cytoplasm. The protein localises to the cytoskeleton. It localises to the cell projection. It is found in the cilium. Its subcellular location is the flagellum. In terms of biological role, may be involved in the regulation of the cytoskeleton through interaction with the subpellicular microtubules. May be involved in parasite mobility and attachment to the surface of the host cell. Behaves as a strong immunogen during infection. The sequence is that of Kinetoplastid membrane protein 11B (KMP-11B) from Leishmania infantum.